The primary structure comprises 435 residues: GTPase Der (435 aa).

2 consecutive EngA-type G domains span residues 4–167 (GIVA…PSHE) and 175–350 (TRVS…TALD). GTP-binding positions include 10–17 (GRPNVGKS), 57–61 (DTGGI), 119–122 (NKYD), 181–188 (GRPNVGKS), 228–232 (DTAGI), and 293–296 (NKWD). Residues 351 to 435 (KKIKTSVFNE…PMSIIFRERK (85 aa)) enclose the KH-like domain.

The protein belongs to the TRAFAC class TrmE-Era-EngA-EngB-Septin-like GTPase superfamily. EngA (Der) GTPase family. As to quaternary structure, associates with the 50S ribosomal subunit.

In terms of biological role, GTPase that plays an essential role in the late steps of ribosome biogenesis. The protein is GTPase Der of Mesoplasma florum (strain ATCC 33453 / NBRC 100688 / NCTC 11704 / L1) (Acholeplasma florum).